The primary structure comprises 236 residues: Hydroxyacylglutathione hydrolase (236 aa).

Positions 52, 54, 56, 57, 108, 125, and 163 each coordinate Zn(2+).

It belongs to the metallo-beta-lactamase superfamily. Glyoxalase II family. In terms of assembly, monomer. Zn(2+) is required as a cofactor.

The enzyme catalyses an S-(2-hydroxyacyl)glutathione + H2O = a 2-hydroxy carboxylate + glutathione + H(+). It functions in the pathway secondary metabolite metabolism; methylglyoxal degradation; (R)-lactate from methylglyoxal: step 2/2. Functionally, thiolesterase that catalyzes the hydrolysis of S-D-lactoyl-glutathione to form glutathione and D-lactic acid. This is Hydroxyacylglutathione hydrolase from Mannheimia succiniciproducens (strain KCTC 0769BP / MBEL55E).